Reading from the N-terminus, the 240-residue chain is Serine protease SplB (240 aa).

Positions 1–36 are cleaved as a signal peptide; it reads MNKNVVIKSLAALTILTSVTGIGTTLVEEVQQTAKA. Active-site charge relay system residues include histidine 75, aspartate 113, and serine 193.

Belongs to the peptidase S1B family.

It localises to the secreted. Serine protease that cleaves specifically after the sequence Trp-Glu-Leu-Gln. The sequence is that of Serine protease SplB (splB) from Staphylococcus aureus (strain USA300).